The sequence spans 269 residues: Tryptophan synthase alpha chain (269 aa).

Residues E49 and D60 each act as proton acceptor in the active site.

This sequence belongs to the TrpA family. As to quaternary structure, tetramer of two alpha and two beta chains.

The enzyme catalyses (1S,2R)-1-C-(indol-3-yl)glycerol 3-phosphate + L-serine = D-glyceraldehyde 3-phosphate + L-tryptophan + H2O. It functions in the pathway amino-acid biosynthesis; L-tryptophan biosynthesis; L-tryptophan from chorismate: step 5/5. Functionally, the alpha subunit is responsible for the aldol cleavage of indoleglycerol phosphate to indole and glyceraldehyde 3-phosphate. This chain is Tryptophan synthase alpha chain, found in Azotobacter vinelandii (strain DJ / ATCC BAA-1303).